The following is a 419-amino-acid chain: UDP-N-acetylglucosamine 1-carboxyvinyltransferase (419 aa).

A phosphoenolpyruvate-binding site is contributed by 22–23 (KN). Arginine 92 is a UDP-N-acetyl-alpha-D-glucosamine binding site. The Proton donor role is filled by cysteine 116. Residue cysteine 116 is modified to 2-(S-cysteinyl)pyruvic acid O-phosphothioketal. UDP-N-acetyl-alpha-D-glucosamine is bound by residues 121 to 125 (RPIDL), aspartate 306, and isoleucine 328.

Belongs to the EPSP synthase family. MurA subfamily.

Its subcellular location is the cytoplasm. The catalysed reaction is phosphoenolpyruvate + UDP-N-acetyl-alpha-D-glucosamine = UDP-N-acetyl-3-O-(1-carboxyvinyl)-alpha-D-glucosamine + phosphate. Its pathway is cell wall biogenesis; peptidoglycan biosynthesis. Functionally, cell wall formation. Adds enolpyruvyl to UDP-N-acetylglucosamine. Target for the antibiotic fosfomycin. The polypeptide is UDP-N-acetylglucosamine 1-carboxyvinyltransferase (Streptococcus pneumoniae (strain Hungary19A-6)).